The following is a 139-amino-acid chain: Histone H3.3 type a (139 aa).

Residues 1-43 (MARTKQTARKSTGAKVPRKHIGSKQAHKQTPVSSSSGGVKKVH) are disordered. Position 5 is an N6,N6,N6-trimethyllysine; by set1; alternate (Lys-5). N6,N6-dimethyllysine; by set1; alternate is present on Lys-5. An N6-acetyllysine; alternate mark is found at Lys-5 and Lys-10. Residue Lys-5 is modified to N6-methyllysine; by set1; alternate. Lys-10 carries the post-translational modification N6,N6,N6-trimethyllysine; alternate. N6,N6-dimethyllysine; alternate is present on Lys-10. Lys-10 is subject to N6-methyllysine; alternate. Ser-11 carries the phosphoserine modification. Lys-15 is subject to N6-acetyllysine. Basic residues predominate over residues 16 to 27 (VPRKHIGSKQAH). N6-acetyllysine; alternate is present on residues Lys-19, Lys-24, Lys-28, and Lys-40. Residues Lys-19, Lys-24, Lys-28, and Lys-40 each carry the N6-methyllysine; alternate modification. N6,N6,N6-trimethyllysine; alternate occurs at positions 28 and 40. 2 positions are modified to N6,N6-dimethyllysine; alternate: Lys-28 and Lys-40. Lys-60 carries the post-translational modification N6-acetyllysine. Lys-83 carries the post-translational modification N6,N6,N6-trimethyllysine; alternate. Lys-83 carries the post-translational modification N6,N6-dimethyllysine; alternate. At Lys-83 the chain carries N6-methyllysine; alternate.

The protein belongs to the histone H3 family. The nucleosome is a histone octamer containing two molecules each of H2A, H2B, H3 and H4 assembled in one H3-H4 heterotetramer and two H2A-H2B heterodimers. The octamer wraps approximately 147 bp of DNA. In terms of processing, acetylation is generally linked to gene activation. Different methylation states of H3K4 mark distinct developmental phases. H3K4me2 is associated with euchromatic regions. H3K4me3 is a mark of active chromatin. set1 is responsible for all mono-, di- and tri-methylation of H3K4. H3K4me facilitates subsequent acetylation of H3 and H4. Methylation at H3K9 and H3K27 are linked to gene repression. Post-translationally, H3S10ph, which is linked to gene activation, prevents methylation at H3K9 but facilitates acetylation of H3 and H4.

It is found in the nucleus. It localises to the chromosome. In terms of biological role, core component of nucleosome. Nucleosomes wrap and compact DNA into chromatin, limiting DNA accessibility to the cellular machineries which require DNA as a template. Histones thereby play a central role in transcription regulation, DNA repair, DNA replication and chromosomal stability. DNA accessibility is regulated via a complex set of post-translational modifications of histones, also called histone code, and nucleosome remodeling. This chain is Histone H3.3 type a (H3a), found in Dictyostelium discoideum (Social amoeba).